The chain runs to 230 residues: Extracellular deoxyribonuclease (230 aa).

A signal peptide spans 1 to 20 (MFRPLLSLCLALLVSAPAHA).

It belongs to the EndA/NucM nuclease family.

The protein localises to the secreted. The polypeptide is Extracellular deoxyribonuclease (dns) (Aeromonas hydrophila).